The following is a 309-amino-acid chain: Protein FdhE homolog (309 aa).

Belongs to the FdhE family.

The protein resides in the cytoplasm. Necessary for formate dehydrogenase activity. This Pasteurella multocida (strain Pm70) protein is Protein FdhE homolog.